The following is a 302-amino-acid chain: Putative receptor-like protein 16 (302 aa).

3 LRR repeats span residues 1–19, 20–43, and 45–70; these read MNLT…LGNM, EMIE…FLKG, and DSLI…NFFS. An LRR 4; degenerate repeat occupies 72–91; that stretch reads LELSMDNNLFTGKIGRGLQS. LRR repeat units follow at residues 92-115, 116-140, 142-164, 166-188, 190-211, 213-234, and 235-258; these read LRSL…WFDQ, LQDL…LFNM, SLQL…ISGY, ALKV…LLGK, IIVL…INTQ, IRIL…LCAV, and RSIH…LRNA.

This sequence belongs to the RLP family.

This is Putative receptor-like protein 16 from Arabidopsis thaliana (Mouse-ear cress).